The primary structure comprises 333 residues: Tetraacyldisaccharide 4'-kinase (333 aa).

60 to 67 (TVGGTGKT) serves as a coordination point for ATP.

This sequence belongs to the LpxK family.

The catalysed reaction is a lipid A disaccharide + ATP = a lipid IVA + ADP + H(+). It participates in glycolipid biosynthesis; lipid IV(A) biosynthesis; lipid IV(A) from (3R)-3-hydroxytetradecanoyl-[acyl-carrier-protein] and UDP-N-acetyl-alpha-D-glucosamine: step 6/6. Its function is as follows. Transfers the gamma-phosphate of ATP to the 4'-position of a tetraacyldisaccharide 1-phosphate intermediate (termed DS-1-P) to form tetraacyldisaccharide 1,4'-bis-phosphate (lipid IVA). In Ectopseudomonas mendocina (strain ymp) (Pseudomonas mendocina), this protein is Tetraacyldisaccharide 4'-kinase.